Here is a 526-residue protein sequence, read N- to C-terminus: Outer capsid protein VP5 (526 aa).

Positions 1-42 are involved in membrane permeabilization; the sequence is MGKIIKSLSRFGKKVGNALTSNTAKKIYNTIGKAAERFAESE.

It belongs to the orbivirus VP5 family.

It is found in the virion. VP5 protein is one of the two proteins (with VP2) which constitute the virus particle outer capsid. Acts as a membrane permeabilization protein that mediates release of viral particles from endosomal compartments into the cytoplasm. Permeabilization activity is probably negatively regulated by VP2 and is triggered by endosomal degradation of VP2 and exposure to low pH. The sequence is that of Outer capsid protein VP5 (Segment-6) from Bluetongue virus 13 (isolate USA) (BTV 13).